The sequence spans 150 residues: Deoxyuridine 5'-triphosphate nucleotidohydrolase (150 aa).

Substrate contacts are provided by residues 69–71, N82, 86–88, and M96; these read RSG and LID.

It belongs to the dUTPase family. Mg(2+) is required as a cofactor.

The catalysed reaction is dUTP + H2O = dUMP + diphosphate + H(+). The protein operates within pyrimidine metabolism; dUMP biosynthesis; dUMP from dCTP (dUTP route): step 2/2. Functionally, this enzyme is involved in nucleotide metabolism: it produces dUMP, the immediate precursor of thymidine nucleotides and it decreases the intracellular concentration of dUTP so that uracil cannot be incorporated into DNA. The polypeptide is Deoxyuridine 5'-triphosphate nucleotidohydrolase (Leptothrix cholodnii (strain ATCC 51168 / LMG 8142 / SP-6) (Leptothrix discophora (strain SP-6))).